We begin with the raw amino-acid sequence, 737 residues long: Photosystem I P700 chlorophyll a apoprotein A2 (737 aa).

Transmembrane regions (helical) follow at residues 46-69, 135-158, 175-199, 273-291, 333-356, 372-398, 420-442, and 520-538; these read LFSTHFGHLAIIGLWVSGNLFHIA, LYQGSIFMMILSAWALFAGWLHLQ, LNHHLAVLFGFSSIAWTGHLVHVAI, IAHHHLAIGCIFVIAGHMY, LHFQLGLALASLGVVTSLVAQHMY, AALYTHHQYIAIALMCGAFAHGAIFFI, AIISHLSWVSLFLGFHTLGLYVH, and FLVHHAIALGLHTTTLILV. [4Fe-4S] cluster-binding residues include Cys-562 and Cys-571. Transmembrane regions (helical) follow at residues 578–599 and 646–668; these read AFYLAVFWALNTVGWVTFYWHW and LAVWAWMFLFGHLVWATGFMFLI. Positions 657, 665, and 673 each coordinate chlorophyll a. Trp-674 is a binding site for phylloquinone. Residues 710–730 form a helical membrane-spanning segment; the sequence is VVGLAHFSVGYVLTYAAFLIA.

It belongs to the PsaA/PsaB family. In terms of assembly, the PsaA/B heterodimer binds the P700 chlorophyll special pair and subsequent electron acceptors. PSI consists of a core antenna complex that captures photons, and an electron transfer chain that converts photonic excitation into a charge separation. The cyanobacterial PSI reaction center is composed of one copy each of PsaA,B,C,D,E,F,I,J,K,L,M and X, and forms trimeric complexes. The cofactor is PSI electron transfer chain: 5 chlorophyll a, 1 chlorophyll a', 2 phylloquinones and 3 4Fe-4S clusters. PSI core antenna: 90 chlorophyll a, 22 carotenoids, 3 phospholipids and 1 galactolipid. P700 is a chlorophyll a/chlorophyll a' dimer, A0 is one or more chlorophyll a, A1 is one or both phylloquinones and FX is a shared 4Fe-4S iron-sulfur center..

It localises to the cellular thylakoid membrane. It catalyses the reaction reduced [plastocyanin] + hnu + oxidized [2Fe-2S]-[ferredoxin] = oxidized [plastocyanin] + reduced [2Fe-2S]-[ferredoxin]. In terms of biological role, psaA and PsaB bind P700, the primary electron donor of photosystem I (PSI), as well as the electron acceptors A0, A1 and FX. PSI is a plastocyanin/cytochrome c6-ferredoxin oxidoreductase, converting photonic excitation into a charge separation, which transfers an electron from the donor P700 chlorophyll pair to the spectroscopically characterized acceptors A0, A1, FX, FA and FB in turn. Oxidized P700 is reduced on the lumenal side of the thylakoid membrane by plastocyanin or cytochrome c6. The polypeptide is Photosystem I P700 chlorophyll a apoprotein A2 (Parasynechococcus marenigrum (strain WH8102)).